Here is a 349-residue protein sequence, read N- to C-terminus: UPF0324 inner membrane protein YeiH (349 aa).

Residues 1-12 (MTELTLQNHRRT) lie on the Periplasmic side of the membrane. A helical transmembrane segment spans residues 13–35 (MWHFIPGLALSAVITGVALWGGA). Topologically, residues 36-38 (IPA) are cytoplasmic. A helical membrane pass occupies residues 39–61 (VAGAGFSALTLAILLGMVIGNTV). Residues 62 to 99 (YPQIWKQCDGGVLFAKQHLLRLGIILYGFRLTFSQIAD) are Periplasmic-facing. A helical transmembrane segment spans residues 100 to 122 (VGISGIVIDVLTLSSTFMLACFL). Residues 123–131 (GQKVFGLDR) are Cytoplasmic-facing. The helical transmembrane segment at 132–151 (HTSWLIGAGSSICGAAAVLA) threads the bilayer. At 152 to 162 (TEPVVKAEASK) the chain is on the periplasmic side. A helical membrane pass occupies residues 163-185 (VTVAVATVVIFGTIAIFLYPAMY). Residues 186-261 (PLLAHWFSPE…SPATGAEKSK (76 aa)) are Cytoplasmic-facing. A helical transmembrane segment spans residues 262-284 (ITIPWFAIFFIVVAIFNSFHLLP). Topologically, residues 285-290 (KAVVDM) are periplasmic. Residues 291–313 (LVTLDTVLLAMAMAALGLTTHVS) form a helical membrane-spanning segment. Residues 314 to 322 (ALKKAGAKP) are Cytoplasmic-facing. The helical transmembrane segment at 323–345 (LLMALALFAWLIIGGGAINVLIH) threads the bilayer. At 346–349 (SLIA) the chain is on the periplasmic side.

Belongs to the UPF0324 family.

The protein resides in the cell inner membrane. The chain is UPF0324 inner membrane protein YeiH (yeiH) from Salmonella typhi.